The chain runs to 107 residues: MTEQKQQKKWHEKRKHLVGVVVSDKMDKTVVVKVDRKVPHPIYGKHIIKSKKYHAHDEHNECRVGDIVMIRETRPLSKTKRWVVVKILQRARRPEEEIQKQQEGQEQ.

The protein belongs to the universal ribosomal protein uS17 family. Part of the 30S ribosomal subunit.

Its function is as follows. One of the primary rRNA binding proteins, it binds specifically to the 5'-end of 16S ribosomal RNA. In Aquifex aeolicus (strain VF5), this protein is Small ribosomal subunit protein uS17.